A 161-amino-acid polypeptide reads, in one-letter code: UPF0303 protein Spro_1996 (161 aa).

Belongs to the UPF0303 family.

In Serratia proteamaculans (strain 568), this protein is UPF0303 protein Spro_1996.